A 65-amino-acid polypeptide reads, in one-letter code: Large ribosomal subunit protein bL35 (65 aa).

2 disordered regions span residues 1–23 (MPKIKTNRAAAKRFKKTGSGKVK) and 29–48 (GSHILAKKSRKRKRDLRQSH). Residues 33–43 (LAKKSRKRKRD) are compositionally biased toward basic residues.

Belongs to the bacterial ribosomal protein bL35 family.

This is Large ribosomal subunit protein bL35 from Desulfatibacillum aliphaticivorans.